We begin with the raw amino-acid sequence, 219 residues long: Chloramphenicol acetyltransferase (219 aa).

His-190 serves as the catalytic Proton acceptor.

It belongs to the chloramphenicol acetyltransferase family. Homotrimer.

It catalyses the reaction chloramphenicol + acetyl-CoA = chloramphenicol 3-acetate + CoA. In terms of biological role, this enzyme is an effector of chloramphenicol resistance in bacteria. This chain is Chloramphenicol acetyltransferase (catB), found in Clostridium butyricum.